A 232-amino-acid polypeptide reads, in one-letter code: Platelet-activating factor acetylhydrolase IB subunit alpha1 (232 aa).

Residue Ser2 is modified to N-acetylserine. Position 2 is a phosphoserine (Ser2). Catalysis depends on residues Ser47, Asp192, and His195.

The protein belongs to the 'GDSL' lipolytic enzyme family. Platelet-activating factor acetylhydrolase IB beta/gamma subunits subfamily. As to quaternary structure, forms a catalytic dimer which is either homodimer (alpha1/alpha1 homodimer) or heterodimer with PAFAH1B2 (alpha1/alpha2 heterodimer). Component of the cytosolic (PAF-AH (I)) heterotetrameric enzyme, which is composed of PAFAH1B1 (beta), PAFAH1B2 (alpha2) and PAFAH1B3 (alpha1) subunits. The catalytic activity of the enzyme resides in the alpha1 (PAFAH1B3) and alpha2 (PAFAH1B2) subunits, whereas the beta subunit (PAFAH1B1) has regulatory activity. Trimer formation is not essential for the catalytic activity. Interacts with VLDLR; this interaction may modulate the Reelin pathway.

It is found in the cytoplasm. The catalysed reaction is a 1-O-alkyl-2-acetyl-sn-glycero-3-phosphocholine + H2O = a 1-O-alkyl-sn-glycero-3-phosphocholine + acetate + H(+). The enzyme catalyses 1-O-hexadecyl-2-acetyl-sn-glycero-3-phosphocholine + H2O = 1-O-hexadecyl-sn-glycero-3-phosphocholine + acetate + H(+). It catalyses the reaction 1-O-hexadecyl-2-acetyl-sn-glycero-3-phosphate + H2O = 1-O-hexadecyl-sn-glycero-3-phosphate + acetate + H(+). With respect to regulation, beta subunit (PAFAH1B1) inhibits the acetylhydrolase activity of the alpha1/alpha1 catalytic homodimer. Its function is as follows. Alpha1 catalytic subunit of the cytosolic type I platelet-activating factor (PAF) acetylhydrolase (PAF-AH (I)) heterotetrameric enzyme that catalyzes the hydrolyze of the acetyl group at the sn-2 position of PAF and its analogs and modulates the action of PAF. The activity and substrate specificity of PAF-AH (I) are affected by its subunit composition. Both alpha1/alpha1 homodimer (PAFAH1B3/PAFAH1B3 homodimer) and alpha1/alpha2 heterodimer(PAFAH1B3/PAFAH1B2 heterodimer) hydrolyze 1-O-alkyl-2-acetyl-sn-glycero-3-phosphoric acid (AAGPA) more efficiently than PAF, but they have little hydrolytic activity towards 1-O-alkyl-2-acetyl-sn-glycero-3-phosphorylethanolamine (AAGPE). Plays an important role during the development of brain. This Bos taurus (Bovine) protein is Platelet-activating factor acetylhydrolase IB subunit alpha1.